A 103-amino-acid polypeptide reads, in one-letter code: Small ribosomal subunit protein uS10 (103 aa).

Belongs to the universal ribosomal protein uS10 family. In terms of assembly, part of the 30S ribosomal subunit.

Its function is as follows. Involved in the binding of tRNA to the ribosomes. In Psychromonas ingrahamii (strain DSM 17664 / CCUG 51855 / 37), this protein is Small ribosomal subunit protein uS10.